The primary structure comprises 424 residues: Serine--tRNA ligase (424 aa).

An L-serine-binding site is contributed by 232–234; the sequence is TAE. 263–265 is an ATP binding site; sequence RQE. Residue glutamate 286 participates in L-serine binding. 350 to 353 contributes to the ATP binding site; it reads EIGS. Serine 386 contributes to the L-serine binding site.

It belongs to the class-II aminoacyl-tRNA synthetase family. Type-1 seryl-tRNA synthetase subfamily. In terms of assembly, homodimer. The tRNA molecule binds across the dimer.

Its subcellular location is the cytoplasm. It carries out the reaction tRNA(Ser) + L-serine + ATP = L-seryl-tRNA(Ser) + AMP + diphosphate + H(+). It catalyses the reaction tRNA(Sec) + L-serine + ATP = L-seryl-tRNA(Sec) + AMP + diphosphate + H(+). It functions in the pathway aminoacyl-tRNA biosynthesis; selenocysteinyl-tRNA(Sec) biosynthesis; L-seryl-tRNA(Sec) from L-serine and tRNA(Sec): step 1/1. Its function is as follows. Catalyzes the attachment of serine to tRNA(Ser). Is also able to aminoacylate tRNA(Sec) with serine, to form the misacylated tRNA L-seryl-tRNA(Sec), which will be further converted into selenocysteinyl-tRNA(Sec). This Onion yellows phytoplasma (strain OY-M) protein is Serine--tRNA ligase.